The primary structure comprises 144 residues: MKLHELKPNEGARDVRKRVGRGTSSGTGKTAGRGQKGQKARSKVRLGFEGGQMPLFRRMPKRGFKNINRKEYAVVNLNDLNRFEDGTEITATVLIEAGVVKNELSGVKVLANGELNKKLNIKVSKYSEAAKAAVEAAGGSIEVI.

Residues 1–14 (MKLHELKPNEGARD) are compositionally biased toward basic and acidic residues. The interval 1–43 (MKLHELKPNEGARDVRKRVGRGTSSGTGKTAGRGQKGQKARSK) is disordered. The span at 23 to 35 (TSSGTGKTAGRGQ) shows a compositional bias: gly residues.

This sequence belongs to the universal ribosomal protein uL15 family. Part of the 50S ribosomal subunit.

Functionally, binds to the 23S rRNA. In Latilactobacillus sakei subsp. sakei (strain 23K) (Lactobacillus sakei subsp. sakei), this protein is Large ribosomal subunit protein uL15.